A 773-amino-acid chain; its full sequence is MDTISDVMKHCVPINYDDYDPLPADHFSTYPVFCSKATAEAIEASAEFTRKWKRACEVDGLHQDKLNFQACTTHLGHYNQWAYPDCLPERVSLNAVLSDCAFFWDGMSPVTGRSTNVMITSPVDVSDSISAEKMNELTQDFGIAMLSELQSGRRIEPRFEINKMAVQVIRDFIAVDPFTGIGHLKEWKGHLDAQEKSTHNNMSWEKYVEHRVNESGGNWGISVGCWTNDIRISDEEKESVKYLTQLACAGGILGNDYYSFPKEFDEHHRSGTLDRLQNGVALLMREYGYTEEEAKEIIKKEVIIREKKWMDGFDAWSRQAGPETGEIRRYLVMTMALMSGSMFWMSHAGRYHRTDLATTAEDRATLIGKSRGALRVLAGYPPPKNLEGIVREPLASAVQDDNGHVQHKDAVADSSVRNGVHHAFKKRNSRNGKQNGTEGSKSTFTNGNYVQPAKLQQHGTSINSMAIYTAPFQEAAGDICDAPYSYIDSLPSKKNRNKLLDLLNDWLQVPPSSLKRIKNIVHMLHNSSLMLDDIEDASALRRGQPATHTFYGISQTINSANYVYVHAVHEVTRLYNPDADELRNLHRGQSLDLYWRHHARCPSMEEYIVMVDNKTGGLFRLMLRLMTAESSISRPLDTALCRLLTLTGRYYQIRDDYLNLASADYESKKGFCEDFDEGKFSLPLIHLLSHTRYPDRITSALFNRKPGTNLPYEMKRYILAEMEEVQTLAYSQDVLKYLHEELMHALDETENRLGANDGIRMMLLGMGPKLLLC.

The interval 4–359 (ISDVMKHCVP…RYHRTDLATT (356 aa)) is sesterterpenoid synthase. A Mg(2+)-binding site is contributed by Asp105. Asp105 contacts substrate. A substrate region spans residues 211-214 (RVNE). Asn255 contributes to the substrate binding site. Substrate regions lie at residues 259–263 (SFPKE) and 350–351 (RY). Positions 360–769 (AEDRATLIGK…RMMLLGMGPK (410 aa)) are geranylfarnesyl diphosphate synthase. The disordered stretch occupies residues 423–447 (AFKKRNSRNGKQNGTEGSKSTFTNG). The segment covering 431–447 (NGKQNGTEGSKSTFTNG) has biased composition (polar residues). Lys493, Arg496, and His525 together coordinate isopentenyl diphosphate. Asp532 and Asp536 together coordinate Mg(2+). Dimethylallyl diphosphate is bound at residue Arg541. An isopentenyl diphosphate-binding site is contributed by Arg542. Positions 614, 615, 652, 659, and 669 each coordinate dimethylallyl diphosphate.

This sequence in the N-terminal section; belongs to the terpene synthase family. It in the C-terminal section; belongs to the FPP/GGPP synthase family.

It catalyses the reaction 4 isopentenyl diphosphate + dimethylallyl diphosphate = (2E,6E,10E,14E)-geranylfarnesyl diphosphate + 4 diphosphate. The catalysed reaction is (2E,6E,10E,14E)-geranylfarnesyl diphosphate + H2O = preaspterpenacid acid I + diphosphate. It functions in the pathway secondary metabolite biosynthesis; terpenoid biosynthesis. Its function is as follows. Sesterterpenoid synthase; part of the gene cluster that mediates the biosynthesis of aspterpenacids. Performs both prenyl transferase and terpene cyclase activity, converting isopentenyl diphosphate and dimethylallyl diphosphate into geranylfarnesyl diphosphate (GFPP) and then converting GFPP into preaspterpenacid I. C22-oxidative modification of preaspterpenacid I by the cytochrome P450 monooxygenase sttB then leads to preaspterpenacid II. It has still to be determined how preaspterpenacid II is further modified to produce aspterpenacids. This chain is Preaspterpenacid I synthase sttA, found in Aspergillus terreus (strain NIH 2624 / FGSC A1156).